The chain runs to 246 residues: Enolase-phosphatase E1 (246 aa).

2 residues coordinate Mg(2+): D11 and E13. Substrate is bound by residues 140–141 (SS) and K174. D199 lines the Mg(2+) pocket.

The protein belongs to the HAD-like hydrolase superfamily. MasA/MtnC family. Monomer. The cofactor is Mg(2+).

The protein localises to the cytoplasm. It is found in the nucleus. The enzyme catalyses 5-methylsulfanyl-2,3-dioxopentyl phosphate + H2O = 1,2-dihydroxy-5-(methylsulfanyl)pent-1-en-3-one + phosphate. It functions in the pathway amino-acid biosynthesis; L-methionine biosynthesis via salvage pathway; L-methionine from S-methyl-5-thio-alpha-D-ribose 1-phosphate: step 3/6. It participates in amino-acid biosynthesis; L-methionine biosynthesis via salvage pathway; L-methionine from S-methyl-5-thio-alpha-D-ribose 1-phosphate: step 4/6. Its function is as follows. Bifunctional enzyme that catalyzes the enolization of 2,3-diketo-5-methylthiopentyl-1-phosphate (DK-MTP-1-P) into the intermediate 2-hydroxy-3-keto-5-methylthiopentenyl-1-phosphate (HK-MTPenyl-1-P), which is then dephosphorylated to form the acireductone 1,2-dihydroxy-3-keto-5-methylthiopentene (DHK-MTPene). The chain is Enolase-phosphatase E1 from Acyrthosiphon pisum (Pea aphid).